Here is a 449-residue protein sequence, read N- to C-terminus: Dynein regulatory complex protein 10 (449 aa).

The stretch at 90-125 forms a coiled coil; that stretch reads AVREHEDLCQVLLENVRCLKEKERQLQEQKEAEEEG. An IQ domain is found at 400-429; sequence MVRAATLIQALWKGYLVRSLLRSKKKRGKG. A disordered region spans residues 422–449; that stretch reads SKKKRGKGKAKDKEKGKQKGKEKGKGKK. Basic and acidic residues predominate over residues 430–449; sequence KAKDKEKGKQKGKEKGKGKK.

The protein belongs to the DRC10 family. Component of the nexin-dynein regulatory complex (N-DRC). Interacts with CFAP52.

The protein resides in the cytoplasm. It localises to the cytoskeleton. It is found in the flagellum axoneme. Functionally, component of the nexin-dynein regulatory complex (N-DRC), a key regulator of ciliary/flagellar motility which maintains the alignment and integrity of the distal axoneme and regulates microtubule sliding in motile axonemes. This chain is Dynein regulatory complex protein 10 (IQCD), found in Homo sapiens (Human).